The chain runs to 234 residues: MRTVSRNEIKRCSAAPRREITGLYAITPDTGDTSHLVAMTWRALAGGARLVQYRSKTLNEELHREQARSLAHLCRRFDVPLLINDHIDLALEVGADGVHLGREDAPISQARLKLGHEKIIGISCYNELESAIEAECNGADYVAFGAFFNSVTKTDTVPASIDLLRQGNLEIRIPIVAIGGINSDNALELISAGADAVAVSNALFGARDIRSEAAKFSGLFKRQSFHPSLSRTSQ.

4-amino-2-methyl-5-(diphosphooxymethyl)pyrimidine is bound by residues 52–56 (QYRSK) and Asn-84. Residues Asp-85 and Asp-104 each contribute to the Mg(2+) site. Residue Ser-123 coordinates 4-amino-2-methyl-5-(diphosphooxymethyl)pyrimidine. 150-152 (SVT) is a binding site for 2-[(2R,5Z)-2-carboxy-4-methylthiazol-5(2H)-ylidene]ethyl phosphate. Lys-153 is a 4-amino-2-methyl-5-(diphosphooxymethyl)pyrimidine binding site. Gly-180 provides a ligand contact to 2-[(2R,5Z)-2-carboxy-4-methylthiazol-5(2H)-ylidene]ethyl phosphate.

This sequence belongs to the thiamine-phosphate synthase family. The cofactor is Mg(2+).

The catalysed reaction is 2-[(2R,5Z)-2-carboxy-4-methylthiazol-5(2H)-ylidene]ethyl phosphate + 4-amino-2-methyl-5-(diphosphooxymethyl)pyrimidine + 2 H(+) = thiamine phosphate + CO2 + diphosphate. It catalyses the reaction 2-(2-carboxy-4-methylthiazol-5-yl)ethyl phosphate + 4-amino-2-methyl-5-(diphosphooxymethyl)pyrimidine + 2 H(+) = thiamine phosphate + CO2 + diphosphate. It carries out the reaction 4-methyl-5-(2-phosphooxyethyl)-thiazole + 4-amino-2-methyl-5-(diphosphooxymethyl)pyrimidine + H(+) = thiamine phosphate + diphosphate. It participates in cofactor biosynthesis; thiamine diphosphate biosynthesis; thiamine phosphate from 4-amino-2-methyl-5-diphosphomethylpyrimidine and 4-methyl-5-(2-phosphoethyl)-thiazole: step 1/1. Functionally, condenses 4-methyl-5-(beta-hydroxyethyl)thiazole monophosphate (THZ-P) and 2-methyl-4-amino-5-hydroxymethyl pyrimidine pyrophosphate (HMP-PP) to form thiamine monophosphate (TMP). The chain is Thiamine-phosphate synthase from Nitrosospira multiformis (strain ATCC 25196 / NCIMB 11849 / C 71).